Here is a 207-residue protein sequence, read N- to C-terminus: Outer-membrane lipoprotein LolB (207 aa).

An N-terminal signal peptide occupies residues 1-26 (MSKLKIDTKRRFSLLIALVLIISLSS). The N-palmitoyl cysteine moiety is linked to residue Cys27. A lipid anchor (S-diacylglycerol cysteine) is attached at Cys27.

Belongs to the LolB family. In terms of assembly, monomer.

It is found in the cell outer membrane. Plays a critical role in the incorporation of lipoproteins in the outer membrane after they are released by the LolA protein. The protein is Outer-membrane lipoprotein LolB of Francisella tularensis subsp. tularensis (strain WY96-3418).